The sequence spans 468 residues: Uronate isomerase (468 aa).

This sequence belongs to the metallo-dependent hydrolases superfamily. Uronate isomerase family.

It carries out the reaction D-glucuronate = D-fructuronate. The catalysed reaction is aldehydo-D-galacturonate = keto-D-tagaturonate. It functions in the pathway carbohydrate metabolism; pentose and glucuronate interconversion. This is Uronate isomerase from Brachyspira hyodysenteriae (strain ATCC 49526 / WA1).